The following is a 220-amino-acid chain: Phosphatidylserine decarboxylase proenzyme (220 aa).

Ser189 functions as the Schiff-base intermediate with substrate; via pyruvic acid in the catalytic mechanism. Ser189 carries the pyruvic acid (Ser); by autocatalysis modification.

It belongs to the phosphatidylserine decarboxylase family. PSD-A subfamily. Heterodimer of a large membrane-associated beta subunit and a small pyruvoyl-containing alpha subunit. Pyruvate serves as cofactor. Post-translationally, is synthesized initially as an inactive proenzyme. Formation of the active enzyme involves a self-maturation process in which the active site pyruvoyl group is generated from an internal serine residue via an autocatalytic post-translational modification. Two non-identical subunits are generated from the proenzyme in this reaction, and the pyruvate is formed at the N-terminus of the alpha chain, which is derived from the carboxyl end of the proenzyme. The post-translation cleavage follows an unusual pathway, termed non-hydrolytic serinolysis, in which the side chain hydroxyl group of the serine supplies its oxygen atom to form the C-terminus of the beta chain, while the remainder of the serine residue undergoes an oxidative deamination to produce ammonia and the pyruvoyl prosthetic group on the alpha chain.

Its subcellular location is the cell membrane. The enzyme catalyses a 1,2-diacyl-sn-glycero-3-phospho-L-serine + H(+) = a 1,2-diacyl-sn-glycero-3-phosphoethanolamine + CO2. It participates in phospholipid metabolism; phosphatidylethanolamine biosynthesis; phosphatidylethanolamine from CDP-diacylglycerol: step 2/2. In terms of biological role, catalyzes the formation of phosphatidylethanolamine (PtdEtn) from phosphatidylserine (PtdSer). The protein is Phosphatidylserine decarboxylase proenzyme of Pelobacter propionicus (strain DSM 2379 / NBRC 103807 / OttBd1).